The chain runs to 313 residues: tRNA dimethylallyltransferase (313 aa).

Residue 10-17 (GPTASGKT) participates in ATP binding. 12–17 (TASGKT) contacts substrate. 3 interaction with substrate tRNA regions span residues 35-38 (DSAM), 159-163 (QRIQR), and 240-245 (RCVGYR).

Belongs to the IPP transferase family. As to quaternary structure, monomer. The cofactor is Mg(2+).

It catalyses the reaction adenosine(37) in tRNA + dimethylallyl diphosphate = N(6)-dimethylallyladenosine(37) in tRNA + diphosphate. Its function is as follows. Catalyzes the transfer of a dimethylallyl group onto the adenine at position 37 in tRNAs that read codons beginning with uridine, leading to the formation of N6-(dimethylallyl)adenosine (i(6)A). The chain is tRNA dimethylallyltransferase from Legionella pneumophila (strain Lens).